We begin with the raw amino-acid sequence, 145 residues long: Large ribosomal subunit protein uL15 (145 aa).

Positions 1–13 are enriched in basic and acidic residues; it reads MNLHELKYNEGAR. The interval 1-56 is disordered; that stretch reads MNLHELKYNEGARKEKHRVGRGHAAGKGKQAGKGQSGQLKRTGSKPGFEGGQNPWY. The segment covering 14–26 has biased composition (basic residues); sequence KEKHRVGRGHAAG.

It belongs to the universal ribosomal protein uL15 family. In terms of assembly, part of the 50S ribosomal subunit.

Its function is as follows. Binds to the 23S rRNA. This Mycoplasma mobile (strain ATCC 43663 / 163K / NCTC 11711) (Mesomycoplasma mobile) protein is Large ribosomal subunit protein uL15.